The following is a 90-amino-acid chain: Small ribosomal subunit protein bS20 (90 aa).

Over residues 1–11 (MANIKSSEKDI) the composition is skewed to basic and acidic residues. A disordered region spans residues 1-29 (MANIKSSEKDIRRTKRRNAANSQNRSRLR).

It belongs to the bacterial ribosomal protein bS20 family.

Binds directly to 16S ribosomal RNA. The protein is Small ribosomal subunit protein bS20 of Leptospira borgpetersenii serovar Hardjo-bovis (strain JB197).